A 130-amino-acid polypeptide reads, in one-letter code: Small ribosomal subunit protein uS9 (130 aa).

This sequence belongs to the universal ribosomal protein uS9 family.

The chain is Small ribosomal subunit protein uS9 from Pseudomonas aeruginosa (strain LESB58).